The following is a 495-amino-acid chain: Ectonucleoside triphosphate diphosphohydrolase 8 (495 aa).

Over M1–R8 the chain is Cytoplasmic. A helical transmembrane segment spans residues V9 to L29. Topologically, residues V30 to G466 are extracellular. C78 and C102 are disulfide-bonded. E168 functions as the Proton acceptor in the catalytic mechanism. A disulfide bridge links C246 with C292. N-linked (GlcNAc...) asparagine glycans are attached at residues N303 and N324. 2 disulfide bridges follow: C328/C334 and C380/C403. A helical transmembrane segment spans residues V467–A487. Topologically, residues V488–D495 are cytoplasmic.

Belongs to the GDA1/CD39 NTPase family. Requires Ca(2+) as cofactor. Mg(2+) serves as cofactor. N-glycosylated.

It is found in the cell membrane. The enzyme catalyses a ribonucleoside 5'-triphosphate + 2 H2O = a ribonucleoside 5'-phosphate + 2 phosphate + 2 H(+). In terms of biological role, canalicular ectonucleoside NTPDase responsible for the main hepatic NTPDase activity. Ectonucleoside NTPDases catalyze the hydrolysis of gamma- and beta-phosphate residues of nucleotides, playing a central role in concentration of extracellular nucleotides. Has activity toward ATP, ADP, UTP and UDP, but not toward AMP. The sequence is that of Ectonucleoside triphosphate diphosphohydrolase 8 (ENTPD8) from Bos taurus (Bovine).